The following is a 363-amino-acid chain: 3-dehydroquinate synthase (363 aa).

NAD(+)-binding positions include 75-80 (DAEEGK), 109-113 (GAVTD), 133-134 (TS), Lys146, Lys155, and 173-176 (TLST). The Zn(2+) site is built by Glu188, His251, and His267.

Belongs to the sugar phosphate cyclases superfamily. Dehydroquinate synthase family. Co(2+) serves as cofactor. Zn(2+) is required as a cofactor. Requires NAD(+) as cofactor.

Its subcellular location is the cytoplasm. It carries out the reaction 7-phospho-2-dehydro-3-deoxy-D-arabino-heptonate = 3-dehydroquinate + phosphate. It functions in the pathway metabolic intermediate biosynthesis; chorismate biosynthesis; chorismate from D-erythrose 4-phosphate and phosphoenolpyruvate: step 2/7. Its function is as follows. Catalyzes the conversion of 3-deoxy-D-arabino-heptulosonate 7-phosphate (DAHP) to dehydroquinate (DHQ). The sequence is that of 3-dehydroquinate synthase from Arthrobacter sp. (strain FB24).